A 705-amino-acid polypeptide reads, in one-letter code: Polyribonucleotide nucleotidyltransferase (705 aa).

Mg(2+) contacts are provided by D486 and D492. Residues P553–I612 form the KH domain. The region spanning G622–K690 is the S1 motif domain.

It belongs to the polyribonucleotide nucleotidyltransferase family. It depends on Mg(2+) as a cofactor.

It localises to the cytoplasm. The enzyme catalyses RNA(n+1) + phosphate = RNA(n) + a ribonucleoside 5'-diphosphate. Functionally, involved in mRNA degradation. Catalyzes the phosphorolysis of single-stranded polyribonucleotides processively in the 3'- to 5'-direction. This chain is Polyribonucleotide nucleotidyltransferase, found in Nitrosomonas eutropha (strain DSM 101675 / C91 / Nm57).